Consider the following 253-residue polypeptide: Chemotaxis protein PomA (253 aa).

Transmembrane regions (helical) follow at residues 6–26 (LLGL…GGSI), 28–48 (MFVD…VVLM), 146–166 (FGDV…VAML), and 180–200 (AVAL…FFPI). Over 201 to 253 (ADKLSLRRDQETLNRRLIMDGVLAIQDGQNPRVIDSYLKNYLNEGKRALEIDE) the chain is Cytoplasmic.

This sequence belongs to the MotA family. In terms of assembly, each stator complex is composed of 4 PomA and 2 PomB subunits. 2 A subunits and 1 B subunit are thought to form a single ion channel, so that each stator complex contains two channels.

The protein localises to the cell inner membrane. Functionally, pomA and PomB comprise the stator element of the flagellar motor complex. Required for rotation of the flagellar motor. Probable transmembrane proton channel. In Vibrio alginolyticus, this protein is Chemotaxis protein PomA (pomA).